Here is a 419-residue protein sequence, read N- to C-terminus: MTTQLEQAWELAKQRFAAVGIDVEEALRQLDRLPVSMHCWQGDDVSGFENPEGSLTGGIQATGNYPGKARNASELRADLEQAMRLIPGPKRLNLHAIYLESDTPVSRDQIKPEHFKNWVEWAKANQLGLDFNPSCFSHPLSADGFTLSHADDSIRQFWIDHCKASRRVSAYFGEQLGTPSVMNIWIPDGMKDITVDRLAPRQRLLAALDEVISEKLNPAHHIDAVESKLFGIGAESYTVGSNEFYMGYATSRQTALCLDAGHFHPTEVISDKISAAMLYVPQLLLHVSRPVRWDSDHVVLLDDETQAIASEIVRHDLFDRVHIGLDFFDASINRIAAWVIGTRNMKKALLRALLEPTAELRKLEAAGDYTARLALLEEQKSLPWQAVWEMYCQRHDTPAGSEWLESVRAYEKEILSRRG.

The Mn(2+) site is built by histidine 262, aspartate 294, and aspartate 296.

This sequence belongs to the rhamnose isomerase family. As to quaternary structure, homotetramer. It depends on Mn(2+) as a cofactor.

The protein localises to the cytoplasm. It carries out the reaction L-rhamnopyranose = L-rhamnulose. It functions in the pathway carbohydrate degradation; L-rhamnose degradation; glycerone phosphate from L-rhamnose: step 1/3. Functionally, catalyzes the interconversion of L-rhamnose and L-rhamnulose. The sequence is that of L-rhamnose isomerase from Escherichia coli (strain K12 / MC4100 / BW2952).